The following is an 876-amino-acid chain: Alanine--tRNA ligase (876 aa).

Zn(2+) contacts are provided by H563, H567, C665, and H669.

This sequence belongs to the class-II aminoacyl-tRNA synthetase family. Requires Zn(2+) as cofactor.

The protein localises to the cytoplasm. It carries out the reaction tRNA(Ala) + L-alanine + ATP = L-alanyl-tRNA(Ala) + AMP + diphosphate. Functionally, catalyzes the attachment of alanine to tRNA(Ala) in a two-step reaction: alanine is first activated by ATP to form Ala-AMP and then transferred to the acceptor end of tRNA(Ala). Also edits incorrectly charged Ser-tRNA(Ala) and Gly-tRNA(Ala) via its editing domain. In Shouchella clausii (strain KSM-K16) (Alkalihalobacillus clausii), this protein is Alanine--tRNA ligase.